Consider the following 1148-residue polypeptide: MSRATSVGDQLDVPARTIYLNQPHLNKFCDNQISTAKYSVVTFLPRFLYEQIRRAANAFFLFIALLQQIPDVSPTGRYTTLVPLIIILTIAGIKEIVEDFKRHKADNAVNKKKTIVLRNGMWQTIVWKEVAVGDIVKVVNGQYLPADVVLLSSSEPQAMCYVETANLDGETNLKIRQGLSHTADMQTREVLMKLSGTIECEGPNRHLYDFTGNLNLDGKSPVALGPDQILLRGTQLRNTQWGFGIVVYTGHDTKLMQNSTKAPLKRSNVEKVTNVQILVLFGILLVMALVSSVGALYWNGSQGGKNWYIKKMDATSDNFGYNLLTFIILYNNLIPISLLVTLEVVKYTQALFINWDTDMYYLGNDTPAMARTSNLNEELGQVKYLFSDKTGTLTCNIMNFKKCSIAGVTYGHFPELTREPSSDDFSRIPPPPSDSCDFDDPRLLKNIEDHHPTAPCIQEFLTLLAVCHTVVPERDGDSIVYQASSPDEAALVKGARKLGFVFTARTPYSVIIEAMGQEQTFGILNVLEFSSDRKRMSVIVRTPSGQLRLYCKGADNVIFERLSKDSKYMEETLCHLEYFATEGLRTLCVAYADLSERDYEEWLKVYQEASTILKDRAQRLEECYEIIEKNLLLLGATAIEDRLQAGVPETIATLLKAEIKIWVLTGDKQETAINIGYSCRLVSQNMALILLKEDSLDATRAAITQHCADLGSLLGKENDAALIIDGHTLKYALSFEVRRSFLDLALSCKAVICCRVSPLQKSEIVDVVKKRVKAITLAIGDGANDVGMIQTAHVGVGISGNEGMQATNNSDYAIAQFSYLEKLLLVHGAWSYNRVTKCILYCFYKNVVLYIIELWFAFVNGFSGQILFERWCIGLYNVIFTALPPFTLGIFERSCSQESMLRFPQLYKITQNAEGFNTKVFWGHCINALVHSLILFWFPMKALEHDTVLANGHATDYLFVGNIVYTYVVVTVCLKAGLETTAWTKFSHLAVWGSMLIWLVFFGIYSTIWPTIPIAPDMKGQATMVLSSAHFWLGLFLVPTACLIEDVAWRAAKHTCKKTLLEEVQELEMKSRVMGRAMLRDSNGKRMNERDRLLKRLSRKTPPTLFRGSSLQQSMPHGYAFSQEEHGAVTQEEIVRAYDTTKQKSRKK.

At 1-54 (MSRATSVGDQLDVPARTIYLNQPHLNKFCDNQISTAKYSVVTFLPRFLYEQIRR) the chain is on the cytoplasmic side. A Phosphothreonine modification is found at T5. Residues 55–75 (AANAFFLFIALLQQIPDVSPT) traverse the membrane as a helical segment. At 76–79 (GRYT) the chain is on the exoplasmic loop side. The helical transmembrane segment at 80-100 (TLVPLIIILTIAGIKEIVEDF) threads the bilayer. The Cytoplasmic portion of the chain corresponds to 101–276 (KRHKADNAVN…SNVEKVTNVQ (176 aa)). A helical membrane pass occupies residues 277–297 (ILVLFGILLVMALVSSVGALY). Residues 298-324 (WNGSQGGKNWYIKKMDATSDNFGYNLL) lie on the Exoplasmic loop side of the membrane. A helical membrane pass occupies residues 325 to 345 (TFIILYNNLIPISLLVTLEVV). The Cytoplasmic segment spans residues 346 to 847 (KYTQALFINW…CILYCFYKNV (502 aa)). Catalysis depends on D388, which acts as the 4-aspartylphosphate intermediate. The ATP site is built by D388, K389, T390, E488, F529, K552, R585, T665, G666, D667, R755, and K761. Mg(2+) is bound at residue D388. Residue T390 coordinates Mg(2+). D781 serves as a coordination point for Mg(2+). Residues N784 and D785 each contribute to the ATP site. D785 is a binding site for Mg(2+). The chain crosses the membrane as a helical span at residues 848–868 (VLYIIELWFAFVNGFSGQILF). The Exoplasmic loop portion of the chain corresponds to 869–870 (ER). Residues 871 to 891 (WCIGLYNVIFTALPPFTLGIF) form a helical membrane-spanning segment. Over 892-919 (ERSCSQESMLRFPQLYKITQNAEGFNTK) the chain is Cytoplasmic. Residues 920–940 (VFWGHCINALVHSLILFWFPM) traverse the membrane as a helical segment. Over 941–957 (KALEHDTVLANGHATDY) the chain is Exoplasmic loop. A helical membrane pass occupies residues 958–978 (LFVGNIVYTYVVVTVCLKAGL). The Cytoplasmic segment spans residues 979-988 (ETTAWTKFSH). A helical membrane pass occupies residues 989 to 1009 (LAVWGSMLIWLVFFGIYSTIW). Over 1010–1023 (PTIPIAPDMKGQAT) the chain is Exoplasmic loop. Residues 1024 to 1044 (MVLSSAHFWLGLFLVPTACLI) form a helical membrane-spanning segment. At 1045-1148 (EDVAWRAAKH…DTTKQKSRKK (104 aa)) the chain is on the cytoplasmic side. The tract at residues 1102-1126 (PPTLFRGSSLQQSMPHGYAFSQEEH) is disordered.

It belongs to the cation transport ATPase (P-type) (TC 3.A.3) family. Type IV subfamily. Component of a P4-ATPase flippase complex which consists of a catalytic alpha subunit and an accessory beta subunit. Interacts with TMEM30A to form a flippase complex. Mg(2+) is required as a cofactor. As to expression, expressed in retinal photoreceptor cells and testis.

The protein resides in the membrane. It is found in the golgi apparatus membrane. The protein localises to the endosome membrane. It localises to the cell membrane. Its subcellular location is the photoreceptor outer segment membrane. The protein resides in the photoreceptor inner segment membrane. It carries out the reaction ATP + H2O + phospholipidSide 1 = ADP + phosphate + phospholipidSide 2.. It catalyses the reaction a 1,2-diacyl-sn-glycero-3-phospho-L-serine(out) + ATP + H2O = a 1,2-diacyl-sn-glycero-3-phospho-L-serine(in) + ADP + phosphate + H(+). The catalysed reaction is a 1,2-diacyl-sn-glycero-3-phosphoethanolamine(in) + ATP + H2O = a 1,2-diacyl-sn-glycero-3-phosphoethanolamine(out) + ADP + phosphate + H(+). With respect to regulation, ATPase activity is stimulated by phosphatidylserine (PS) and minimally by phosphatidylethanolamine (PE). ATPase activity is inhibited by N-ethylmaleimide (NEM) and vanadate. Flippase activity is inhibited by NEM and 1,2-dioleoyl-sn-glycero-3-phospho-L-serine (DOPS). In terms of biological role, catalytic component of a P4-ATPase flippase complex which catalyzes the hydrolysis of ATP coupled to the transport of aminophospholipids from the outer to the inner leaflet of various membranes and ensures the maintenance of asymmetric distribution of phospholipids. Able to translocate phosphatidylserine, but not phosphatidylcholine. Phospholipid translocation seems also to be implicated in vesicle formation and in uptake of lipid signaling molecules. Reconstituted to liposomes, the ATP8A2:TMEM30A flippase complex predominantly transports phosphatidylserine (PS) and to a lesser extent phosphatidylethanolamine (PE). Phospholipid translocation is not associated with a countertransport of an inorganic ion or other charged substrate from the cytoplasmic side toward the exoplasm in connection with the phosphorylation from ATP. ATP8A2:TMEM30A may be involved in regulation of neurite outgrowth. Proposed to function in the generation and maintenance of phospholipid asymmetry in photoreceptor disk membranes and neuronal axon membranes. May be involved in vesicle trafficking in neuronal cells. Required for normal visual and auditory function; involved in photoreceptor and inner ear spiral ganglion cell survival. This chain is Phospholipid-transporting ATPase IB, found in Bos taurus (Bovine).